The sequence spans 285 residues: Polyamine aminopropyltransferase (285 aa).

The 236-residue stretch at 2 to 237 (DLWFSESHTP…GYWCFGFASK (236 aa)) folds into the PABS domain. Residue Gln31 coordinates S-methyl-5'-thioadenosine. Asp86 contributes to the spermidine binding site. S-methyl-5'-thioadenosine-binding positions include Glu106 and 137–138 (DG). Residue Asp155 is the Proton acceptor of the active site.

The protein belongs to the spermidine/spermine synthase family. Homodimer or homotetramer.

The protein localises to the cytoplasm. It catalyses the reaction S-adenosyl 3-(methylsulfanyl)propylamine + putrescine = S-methyl-5'-thioadenosine + spermidine + H(+). Its pathway is amine and polyamine biosynthesis; spermidine biosynthesis; spermidine from putrescine: step 1/1. Catalyzes the irreversible transfer of a propylamine group from the amino donor S-adenosylmethioninamine (decarboxy-AdoMet) to putrescine (1,4-diaminobutane) to yield spermidine. This chain is Polyamine aminopropyltransferase, found in Streptococcus uberis (strain ATCC BAA-854 / 0140J).